Consider the following 592-residue polypeptide: Calnexin (592 aa).

An N-terminal signal peptide occupies residues 1–20 (MEGKWLLCMLLVLGTAIVEA). The Lumenal portion of the chain corresponds to 21-481 (HDGHDDDVID…QMIEAAEERP (461 aa)). The Ca(2+) site is built by S74 and D117. At K137 the chain carries N6-acetyllysine. An intrachain disulfide couples C160 to C194. An alpha-D-glucoside is bound by residues Y164, K166, Y185, and D192. The segment at 260–345 (GNLLNDMTPP…AEKPEDWDED (86 aa)) is disordered. Positions 274–319 (REIEDPEDRKPEDWDERPKIPDPEAVKPDDWDEDAPAKIPDEEATK) are enriched in basic and acidic residues. A p domain (Extended arm) region spans residues 276-409 (IEDPEDRKPE…RKIPNPDFFE (134 aa)). Tandem repeats lie at residues 278-290 (DPEDRKPEDWDER), 295-307 (DPEAVKPDDWDED), 314-326 (DEEATKPEGWLDD), 333-345 (DPDAEKPEDWDED), and 348-358 (GEWEAPQIANP). 2 4 X approximate repeats regions span residues 278–345 (DPED…WDED) and 348–405 (GEWE…IPNP). Residues 323 to 345 (WLDDEPEYVPDPDAEKPEDWDED) show a composition bias toward acidic residues. The interaction with PPIB stretch occupies residues 326–359 (DEPEYVPDPDAEKPEDWDEDMDGEWEAPQIANPR). A disulfide bridge connects residues C360 and C366. 3 consecutive repeat copies span residues 367–377 (GVWQRPVIDNP), 381–391 (GKWKPPMIDNP), and 395–405 (GIWKPRKIPNP). E425 is an an alpha-D-glucoside binding site. D436 serves as a coordination point for Ca(2+). Residues 482–502 (WLWVVYILTVALPVFLVILFC) traverse the membrane as a helical segment. S-palmitoyl cysteine attachment occurs at residues C502 and C503. Residues 503 to 592 (CSGKKQTSGM…SPRNRKPRRE (90 aa)) lie on the Cytoplasmic side of the membrane. The sufficient to mediate interaction with SGIP1 stretch occupies residues 503 to 592 (CSGKKQTSGM…SPRNRKPRRE (90 aa)). A disordered region spans residues 511-592 (GMEYKKTDAP…SPRNRKPRRE (82 aa)). Residues 525 to 547 (KEEEEEKEEEKDKGDEEEEGEEK) show a composition bias toward acidic residues. A Phosphoserine modification is found at S554. T562 carries the post-translational modification Phosphothreonine. At S564 the chain carries Phosphoserine; by MAPK3. S583 carries the phosphoserine modification.

The protein belongs to the calreticulin family. In terms of assembly, interacts with MAPK3/ERK1. Interacts with KCNH2. Associates with ribosomes. Interacts with SGIP1; involved in negative regulation of endocytosis. The palmitoylated form interacts with the ribosome-translocon complex component SSR1, promoting efficient folding of glycoproteins. Interacts with SERPINA2P/SERPINA2 and with the S and Z variants of SERPINA1. Interacts with PPIB. Interacts with ZNRF4. Interacts with SMIM22. Interacts with TMX2. Interacts with TMEM35A/NACHO. Interacts with CHRNA7. Interacts with reticulophagy regulators RETREG2 and RETREG3. Interacts with DNM1L; may form part of a larger protein complex at the ER-mitochondrial interface during mitochondrial fission. Interacts with ADAM7. As to quaternary structure, (Microbial infection) Interacts with HBV large envelope protein, isoform L. (Microbial infection) Interacts with HBV large envelope protein, isoform M; this association may be essential for isoform M proper secretion. In terms of processing, phosphorylated at Ser-564 by MAPK3/ERK1. Phosphorylation by MAPK3/ERK1 increases its association with ribosomes. Palmitoylation by DHHC6 leads to the preferential localization to the perinuclear rough ER. It mediates the association of calnexin with the ribosome-translocon complex (RTC) which is required for efficient folding of glycosylated proteins. Post-translationally, ubiquitinated, leading to proteasomal degradation. Probably ubiquitinated by ZNRF4.

The protein resides in the endoplasmic reticulum membrane. The protein localises to the mitochondrion membrane. It is found in the melanosome membrane. Its function is as follows. Calcium-binding protein that interacts with newly synthesized monoglucosylated glycoproteins in the endoplasmic reticulum. It may act in assisting protein assembly and/or in the retention within the ER of unassembled protein subunits. It seems to play a major role in the quality control apparatus of the ER by the retention of incorrectly folded proteins. Associated with partial T-cell antigen receptor complexes that escape the ER of immature thymocytes, it may function as a signaling complex regulating thymocyte maturation. Additionally it may play a role in receptor-mediated endocytosis at the synapse. The sequence is that of Calnexin (CANX) from Homo sapiens (Human).